The following is a 735-amino-acid chain: 1,4-alpha-glucan branching enzyme GlgB (735 aa).

Asp-418 functions as the Nucleophile in the catalytic mechanism. Residue Glu-471 is the Proton donor of the active site.

This sequence belongs to the glycosyl hydrolase 13 family. GlgB subfamily. As to quaternary structure, monomer.

The catalysed reaction is Transfers a segment of a (1-&gt;4)-alpha-D-glucan chain to a primary hydroxy group in a similar glucan chain.. It participates in glycan biosynthesis; glycogen biosynthesis. Functionally, catalyzes the formation of the alpha-1,6-glucosidic linkages in glycogen by scission of a 1,4-alpha-linked oligosaccharide from growing alpha-1,4-glucan chains and the subsequent attachment of the oligosaccharide to the alpha-1,6 position. This is 1,4-alpha-glucan branching enzyme GlgB from Agrobacterium fabrum (strain C58 / ATCC 33970) (Agrobacterium tumefaciens (strain C58)).